A 734-amino-acid chain; its full sequence is Ribosome-releasing factor 2, mitochondrial (734 aa).

Residues 1–25 constitute a mitochondrion transit peptide; it reads MLQYCLLRRYRFLLRQHAQVIKRCY. Residues 27–303 form the tr-type G domain; it reads GDIRNIGILA…AVNAYLPMPE (277 aa). GTP is bound by residues 36 to 43, 100 to 104, and 154 to 157; these read AHIDAGKT, DTPGH, and NKMD.

Belongs to the TRAFAC class translation factor GTPase superfamily. Classic translation factor GTPase family. EF-G/EF-2 subfamily.

Its subcellular location is the mitochondrion. Mitochondrial GTPase that mediates the disassembly of ribosomes from messenger RNA at the termination of mitochondrial protein biosynthesis. Not involved in the GTP-dependent ribosomal translocation step during translation elongation. This chain is Ribosome-releasing factor 2, mitochondrial, found in Drosophila grimshawi (Hawaiian fruit fly).